Reading from the N-terminus, the 90-residue chain is Probable Fe(2+)-trafficking protein (90 aa).

The protein belongs to the Fe(2+)-trafficking protein family.

Could be a mediator in iron transactions between iron acquisition and iron-requiring processes, such as synthesis and/or repair of Fe-S clusters in biosynthetic enzymes. This is Probable Fe(2+)-trafficking protein from Bordetella avium (strain 197N).